Here is a 144-residue protein sequence, read N- to C-terminus: uncharacterized protein (144 aa).

The HTH lysR-type domain maps to M1 to T58. Residues F18–A38 constitute a DNA-binding region (H-T-H motif).

The protein belongs to the LysR transcriptional regulatory family.

This is an uncharacterized protein from Azotobacter vinelandii.